We begin with the raw amino-acid sequence, 51 residues long: Cytoplasmic FMR1-interacting protein 1 (51 aa).

Belongs to the CYFIP family. Component of the WAVE1 complex composed of ABI2, CYFIP1 or CYFIP2, BRK1, NCKAP1 and WASF1/WAVE1. Within the complex, a heterodimer containing NCKAP1 and CYFIP1 interacts with a heterotrimer formed by WAVE1, ABI2 and BRK1. Component of the CYFIP1-EIF4E-FMR1 complex which is composed of CYFIP, EIF4E and FMR1. Interacts with FMR1 but does not bind to related proteins FXR1 or FXR2. Interaction with EIF4E stimulates FMR1 binding. Component of the WAVE2 complex composed of ABI1, CYFIP1/SRA1, NCKAP1/NAP1 (NCKAP1l/HEM1 in hematopoietic cells) and WASF2/WAVE2. Interacts with the active GTP-bound form of RAC1. Interacts through its C-terminus with the C-terminus of DPYSL2/CRMP2 which is necessary for DPYSL2-induced axon outgrowth. Interacts with NYAP1, NYAP2 and MYO16. Interacts with TMEM108 (via N-terminus); the interaction associates TMEM108 with the WAVE1 complex.

Its subcellular location is the cytoplasm. It localises to the perinuclear region. The protein resides in the cell projection. The protein localises to the lamellipodium. It is found in the ruffle. Its subcellular location is the synapse. It localises to the synaptosome. In terms of biological role, component of the CYFIP1-EIF4E-FMR1 complex which binds to the mRNA cap and mediates translational repression. In the CYFIP1-EIF4E-FMR1 complex this subunit is an adapter between EIF4E and FMR1. Promotes the translation repression activity of FMR1 in brain probably by mediating its association with EIF4E and mRNA. Regulates formation of membrane ruffles and lamellipodia. Plays a role in axon outgrowth. Binds to F-actin but not to RNA. Part of the WAVE complex that regulates actin filament reorganization via its interaction with the Arp2/3 complex. Actin remodeling activity is regulated by RAC1. Regulator of epithelial morphogenesis. As component of the WAVE1 complex, required for BDNF-NTRK2 endocytic trafficking and signaling from early endosomes. The sequence is that of Cytoplasmic FMR1-interacting protein 1 from Bos taurus (Bovine).